An 89-amino-acid polypeptide reads, in one-letter code: Co-chaperonin GroES (89 aa).

The protein belongs to the GroES chaperonin family. Heptamer of 7 subunits arranged in a ring. Interacts with the chaperonin GroEL.

Its subcellular location is the cytoplasm. In terms of biological role, together with the chaperonin GroEL, plays an essential role in assisting protein folding. The GroEL-GroES system forms a nano-cage that allows encapsulation of the non-native substrate proteins and provides a physical environment optimized to promote and accelerate protein folding. GroES binds to the apical surface of the GroEL ring, thereby capping the opening of the GroEL channel. The sequence is that of Co-chaperonin GroES from Kosmotoga olearia (strain ATCC BAA-1733 / DSM 21960 / TBF 19.5.1).